The sequence spans 146 residues: D-aminoacyl-tRNA deacylase (146 aa).

The short motif at 137-138 (GP) is the Gly-cisPro motif, important for rejection of L-amino acids element.

This sequence belongs to the DTD family. In terms of assembly, homodimer.

It is found in the cytoplasm. The catalysed reaction is glycyl-tRNA(Ala) + H2O = tRNA(Ala) + glycine + H(+). It catalyses the reaction a D-aminoacyl-tRNA + H2O = a tRNA + a D-alpha-amino acid + H(+). Functionally, an aminoacyl-tRNA editing enzyme that deacylates mischarged D-aminoacyl-tRNAs. Also deacylates mischarged glycyl-tRNA(Ala), protecting cells against glycine mischarging by AlaRS. Acts via tRNA-based rather than protein-based catalysis; rejects L-amino acids rather than detecting D-amino acids in the active site. By recycling D-aminoacyl-tRNA to D-amino acids and free tRNA molecules, this enzyme counteracts the toxicity associated with the formation of D-aminoacyl-tRNA entities in vivo and helps enforce protein L-homochirality. This is D-aminoacyl-tRNA deacylase from Shouchella clausii (strain KSM-K16) (Alkalihalobacillus clausii).